The chain runs to 316 residues: Protoheme IX farnesyltransferase (316 aa).

9 helical membrane passes run 28–48 (WLAL…AAGM), 57–77 (IPIG…AGAI), 106–126 (AALV…WLAT), 129–149 (LAAD…TMWL), 156–176 (NIVI…AATM), 179–199 (MAVL…PHFW), 230–250 (ILIY…VHEV), 254–274 (YTVV…RVLM), and 296–316 (YSLV…VLIG).

This sequence belongs to the UbiA prenyltransferase family. Protoheme IX farnesyltransferase subfamily.

The protein resides in the cell inner membrane. It catalyses the reaction heme b + (2E,6E)-farnesyl diphosphate + H2O = Fe(II)-heme o + diphosphate. The protein operates within porphyrin-containing compound metabolism; heme O biosynthesis; heme O from protoheme: step 1/1. In terms of biological role, converts heme B (protoheme IX) to heme O by substitution of the vinyl group on carbon 2 of heme B porphyrin ring with a hydroxyethyl farnesyl side group. The protein is Protoheme IX farnesyltransferase of Gluconobacter oxydans (strain 621H) (Gluconobacter suboxydans).